Here is a 261-residue protein sequence, read N- to C-terminus: Small ribosomal subunit protein mS23 (261 aa).

The segment at 228–261 is disordered; it reads EQRAAAFTGAPEIPSTEDSLGLEEGVEEKQPQQA.

Belongs to the mitochondrion-specific ribosomal protein mS23 family. Component of the mitochondrial small ribosomal subunit.

It is found in the mitochondrion. The polypeptide is Small ribosomal subunit protein mS23 (rsm25) (Aspergillus oryzae (strain ATCC 42149 / RIB 40) (Yellow koji mold)).